We begin with the raw amino-acid sequence, 1243 residues long: MLIKEYHILLPMSLDEYQVAQLYMIQKKSREESSGEGSGVEILANRPYTDGPGGNGQYTHKVYHVGSHIPGWFRALLPKAALQVEEESWNAYPYTRTRYTCPFVEKFSIEIETYYLPDGGQQPNVFNLSGAERRQRIVDTIDIVRDAVAPGEYKAEEDPRLYRSAKTGRGPLADDWARTAAQTGPLMCAYKLCKVEFRYWGMQAKIEQFIHDVGLRRVMLRAHRQAWCWQDEWIELSMADIRALEEETARMLAQRMAKCNTGSEGPEAQTPGKSSTEARPGTSTAGTPDGPEAPPGPDASPDASFGKQWSSSSRSSYSSQHGGGVSPQSLSEWRMQNIARDSENSSEEEFFDAHEGFSDSDEVFPKEMTKWNSNDFIDAFASPTEVEGVPDPTVMATKGIEDGARAPRDSEGLDGAGDLVVEACSVHALFLILHSGSILDSGPGDTNSKQADVQTLSTAFEAVTRVHFPEALGHVALRLVPCPPICAAAYALVSNLSPYSHDGDSLSRSQDHIPLAALPLLATSSSRYQGAVATVIARTNQAYAAFLRSSEGTGFCGQVVLIGDGVGGILGFDALCHSASAGPGSRGSSRRGSMNNEMLSPEVGPVRDPLADGVEVLGRASPEPSALPAQRTFSDMANPDPDGSQNSLQVASTATSSGEPRRASTASCPPASSEAPDGPTNAARLDFKVSGFFLFGSPLGLVLALRKTVMPALEVAQLRPACEQIYNLFHAADPCASRLEPLLAPKFQAIAPLAVPRYQKFPLGDGSSLLLADTLQTHSSLFLEELEMMVPSTPTSASGAFWKGSELGNEPASQTAAPSTTSEVVKILDRWWGNKRIDYSLYCPEALTAFPTVTLPHLFHASYWESADVVAFILRQVIEKERPQLTECEEPSIYSPAFPREKWQRKRTQVKIRNVTSNHRASDTVVCEGRPQVLNGRFMYGPLDVVTLTGEKVDVYVMTQPLSGKWIHFGTEVTNSSGRLTFPVPSERALGIGVYPVRMVVRGDHTYAECCLTVVSRGTEAVVFSIDGSFTASVSIMGSDPKVRAGAVDVVRHWQDSGYLIVYVTGRPDMQKHRVVAWLSQHNFPHGVVSFCDGLTHDPLRQKAMFLQSLVQEVELNIVAGYGSPKDVAVYAALGLSPSQTYIVGRAVRKLQAQCQFLSDGYVAHLGQLEAGSHSHAPSGPPRAALAKSSYAVAAPVDFLRKQSQLLRSRGPSQVDREGPGTPPTTLARGKTRSISLKLDSEE.

Phosphothreonine occurs at positions 59, 282, and 287. Positions 259–330 (CNTGSEGPEA…HGGGVSPQSL (72 aa)) are disordered. The segment covering 271-283 (PGKSSTEARPGTS) has biased composition (polar residues). The span at 299–319 (ASPDASFGKQWSSSSRSSYSS) shows a compositional bias: low complexity. Phosphoserine is present on residues Ser300, Ser304, Ser319, Ser326, Ser329, Ser342, Ser345, Ser346, and Ser373. Ser382 bears the Phosphoserine; by CDK1 mark. Over residues 581-593 (AGPGSRGSSRRGS) the composition is skewed to low complexity. The tract at residues 581–679 (AGPGSRGSSR…PASSEAPDGP (99 aa)) is disordered. 3 positions are modified to phosphoserine: Ser593, Ser600, and Ser621. Residues 643 to 658 (GSQNSLQVASTATSSG) show a composition bias toward polar residues. The DDHD domain maps to 684-878 (RLDFKVSGFF…VVAFILRQVI (195 aa)). At Ser895 the chain carries Phosphoserine. Residues 1206-1243 (LLRSRGPSQVDREGPGTPPTTLARGKTRSISLKLDSEE) form a disordered region. An omega-N-methylarginine mark is found at Arg1210 and Arg1217. The residue at position 1236 (Ser1236) is a Phosphoserine.

It belongs to the PtdIns transfer protein family. PI transfer class IIA subfamily. In terms of assembly, interacts with PTK2B via its C-terminus. Interacts with RHOA. Has higher affinity for the inactive, GDP-bound form of RHOA. The CDK1-phosphorylated form interacts with PLK1. Interacts with VAPB and PIK4CA. In terms of processing, phosphorylated on multiple sites by CDK1 at the onset of mitosis. Phosphorylation facilitates dissociation from the Golgi complex and is required for interaction with PLK1. Phosphorylated on threonine residues upon treatment with oleic acid. Post-translationally, phosphorylated on tyrosine residues by PTK2B. As to expression, detected at high levels in brain, and at lower levels in lung, kidney, spleen and liver (at protein level). Ubiquitous. Highly expressed in embryonic retina and the central nervous system.

The protein localises to the cytoplasm. It localises to the golgi apparatus. It is found in the golgi stack membrane. Its subcellular location is the endoplasmic reticulum membrane. The protein resides in the lipid droplet. The protein localises to the cleavage furrow. It localises to the midbody. The catalysed reaction is a 1,2-diacyl-sn-glycero-3-phospho-(1D-myo-inositol)(in) = a 1,2-diacyl-sn-glycero-3-phospho-(1D-myo-inositol)(out). In terms of biological role, catalyzes the transfer of phosphatidylinositol (PI) between membranes. Binds PI. Also binds phosphatidylcholine (PC) and phosphatidic acid (PA) with the binding affinity order of PI &gt; PA &gt; PC. Regulates RHOA activity, and plays a role in cytoskeleton remodeling. Necessary for normal completion of cytokinesis. Plays a role in maintaining normal diacylglycerol levels in the Golgi apparatus. Necessary for maintaining the normal structure of the endoplasmic reticulum and the Golgi apparatus. Required for protein export from the endoplasmic reticulum and the Golgi. Binds calcium ions. The protein is Membrane-associated phosphatidylinositol transfer protein 1 (Pitpnm1) of Mus musculus (Mouse).